We begin with the raw amino-acid sequence, 156 residues long: Small ribosomal subunit protein uS7 (156 aa).

The protein belongs to the universal ribosomal protein uS7 family. As to quaternary structure, part of the 30S ribosomal subunit. Contacts proteins S9 and S11.

One of the primary rRNA binding proteins, it binds directly to 16S rRNA where it nucleates assembly of the head domain of the 30S subunit. Is located at the subunit interface close to the decoding center, probably blocks exit of the E-site tRNA. The polypeptide is Small ribosomal subunit protein uS7 (Bartonella quintana (strain Toulouse) (Rochalimaea quintana)).